Here is a 324-residue protein sequence, read N- to C-terminus: Delta-aminolevulinic acid dehydratase (324 aa).

The Zn(2+) site is built by C118, C120, and C128. Residue K195 is the Schiff-base intermediate with substrate of the active site. Residues R205 and R217 each contribute to the 5-aminolevulinate site. A Mg(2+)-binding site is contributed by E233. K248 functions as the Schiff-base intermediate with substrate in the catalytic mechanism. 2 residues coordinate 5-aminolevulinate: S274 and Y313.

Belongs to the ALAD family. As to quaternary structure, homooctamer. Requires Zn(2+) as cofactor.

It catalyses the reaction 2 5-aminolevulinate = porphobilinogen + 2 H2O + H(+). Its pathway is porphyrin-containing compound metabolism; protoporphyrin-IX biosynthesis; coproporphyrinogen-III from 5-aminolevulinate: step 1/4. Its function is as follows. Catalyzes an early step in the biosynthesis of tetrapyrroles. Binds two molecules of 5-aminolevulinate per subunit, each at a distinct site, and catalyzes their condensation to form porphobilinogen. The protein is Delta-aminolevulinic acid dehydratase (hemB) of Staphylococcus epidermidis (strain ATCC 12228 / FDA PCI 1200).